The primary structure comprises 335 residues: Dolichyl-diphosphooligosaccharide--protein glycosyltransferase subunit MAGT1 (335 aa).

A signal peptide spans 1–29; that stretch reads MAAGWWFWCVSVTVAVALLIVCDVPSVSA. Over 30 to 184 the chain is Extracellular; sequence QRKKEMVLSE…DVNIRVIRPP (155 aa). Residues 47 to 175 enclose the Thioredoxin domain; that stretch reads WTNKRPVIRM…IARWIADRTD (129 aa). A glycan (N-linked (GlcNAc...) asparagine) is linked at Asn-71. Cys-87 and Cys-90 are oxidised to a cystine. A helical membrane pass occupies residues 185–205; sequence NYAGPLMLGLLLAVIGGLVYL. The Cytoplasmic segment spans residues 206–209; it reads RRSN. The helical transmembrane segment at 210–230 threads the bilayer; the sequence is MEFLFNKTGWAFAALCFVLAM. Residues 231-270 lie on the Extracellular side of the membrane; it reads TSGQMWNHIRGPPYAHKNPHTGHVNYIHGSSQAQFVAETH. Residues 271-291 form a helical membrane-spanning segment; that stretch reads IVLLFNGGVTLGMVLLCEAAT. Residues 292-300 lie on the Cytoplasmic side of the membrane; it reads SDMDIGKRK. A helical transmembrane segment spans residues 301 to 321; sequence IMCVAGIGLVVLFFSWMLSIF. Over 322–335 the chain is Extracellular; that stretch reads RSKYHGYPYSFLMS.

The protein belongs to the OST3/OST6 family. Accessory component of the STT3B-containing form of the oligosaccharyltransferase (OST) complex. OST exists in two different complex forms which contain common core subunits RPN1, RPN2, OST48, OST4, DAD1 and TMEM258, either STT3A or STT3B as catalytic subunits, and form-specific accessory subunits. OST can form stable complexes with the Sec61 complex or with both the Sec61 and TRAP complexes. The association of TUSC3 or MAGT1 with the STT3B-containing complex seems to be mutually exclusvice.

The protein resides in the cell membrane. It is found in the endoplasmic reticulum. It localises to the endoplasmic reticulum membrane. It participates in protein modification; protein glycosylation. In terms of biological role, accessory component of the STT3B-containing form of the N-oligosaccharyl transferase (OST) complex which catalyzes the transfer of a high mannose oligosaccharide from a lipid-linked oligosaccharide donor to an asparagine residue within an Asn-X-Ser/Thr consensus motif in nascent polypeptide chains. Involved in N-glycosylation of STT3B-dependent substrates. Specifically required for the glycosylation of a subset of acceptor sites that are near cysteine residues; in this function seems to act redundantly with TUSC3. In its oxidized form proposed to form transient mixed disulfides with a glycoprotein substrate to facilitate access of STT3B to the unmodified acceptor site. Also has oxidoreductase-independent functions in the STT3B-containing OST complex possibly involving substrate recognition. Could indirectly play a role in Mg(2+) transport in epithelial cells. This is Dolichyl-diphosphooligosaccharide--protein glycosyltransferase subunit MAGT1 from Pongo abelii (Sumatran orangutan).